Reading from the N-terminus, the 272-residue chain is Phosphatidylglycerol--prolipoprotein diacylglyceryl transferase (272 aa).

A run of 4 helical transmembrane segments spans residues 15–35 (LGPLYVHMYSVFMLAGALVLF), 53–73 (AFAVTSLLIPVILGARLWHVV), 94–114 (GLGFIGGVFSGLICFFVIAKI), and 117–137 (VPPFTFLDALAPGILVALCFA). An a 1,2-diacyl-sn-glycero-3-phospho-(1'-sn-glycerol)-binding site is contributed by Arg138. The next 3 membrane-spanning stretches (helical) occupy residues 174–194 (FHPIFLYEIILNVFIIVILLV), 199–219 (VFVKTVFPKGSVFAAFLVLYG), and 237–257 (FGLDLNYVGAAAMIIVGVLIA).

This sequence belongs to the Lgt family.

The protein resides in the cell membrane. The catalysed reaction is L-cysteinyl-[prolipoprotein] + a 1,2-diacyl-sn-glycero-3-phospho-(1'-sn-glycerol) = an S-1,2-diacyl-sn-glyceryl-L-cysteinyl-[prolipoprotein] + sn-glycerol 1-phosphate + H(+). Its pathway is protein modification; lipoprotein biosynthesis (diacylglyceryl transfer). In terms of biological role, catalyzes the transfer of the diacylglyceryl group from phosphatidylglycerol to the sulfhydryl group of the N-terminal cysteine of a prolipoprotein, the first step in the formation of mature lipoproteins. In Tropheryma whipplei (strain TW08/27) (Whipple's bacillus), this protein is Phosphatidylglycerol--prolipoprotein diacylglyceryl transferase.